The primary structure comprises 662 residues: Leucine aminopeptidase 2 (662 aa).

A peptide contacts are provided by residues 178–180 (QLE) and 304–309 (PYGGME). Zn(2+) is bound at residue histidine 333. The Proton acceptor role is filled by glutamate 334. 2 residues coordinate Zn(2+): histidine 337 and glutamate 356. Residue tyrosine 422 is the Proton donor of the active site.

This sequence belongs to the peptidase M1 family. Zn(2+) is required as a cofactor.

The protein localises to the cytoplasm. Its subcellular location is the nucleus. The catalysed reaction is an epoxide + H2O = an ethanediol. Aminopeptidase that preferentially cleaves di- and tripeptides. Also has low epoxide hydrolase activity (in vitro). Can hydrolyze the epoxide leukotriene LTA(4) but it forms preferentially 5,6-dihydroxy-7,9,11,14-eicosatetraenoic acid rather than the cytokine leukotriene B(4) as the product compared to the homologous mammalian enzyme (in vitro). The chain is Leucine aminopeptidase 2 from Kluyveromyces lactis (strain ATCC 8585 / CBS 2359 / DSM 70799 / NBRC 1267 / NRRL Y-1140 / WM37) (Yeast).